A 272-amino-acid polypeptide reads, in one-letter code: MFINIEPLYSSMVENIKERVSKLSKPPKLVAVTCQPDSSTLAYLRSQEKQAKRFGIDFAVYEAPKAMDLKILLPKLSADGSVNGIFLTHPLPSDISEYEAVSLISPDKDIEGRHPINLGNILYDKPVFPPCTAEAVLRIINYLTNPSGKKIAVIGRSVTVGKPLAMLLLQKGIDATVTICHSRTKDIAEITKNSDIVVVAIGKAKMFGKDYFKPGTIVIDVGINVEGDEIVGDVDPSVSEICELTPVPGGVGRITTLVLMEHTVKAAEMSLK.

NADP(+) is bound by residues 155–157, Ser-182, and Ile-223; that span reads GRS.

This sequence belongs to the tetrahydrofolate dehydrogenase/cyclohydrolase family. Homodimer.

It carries out the reaction (6R)-5,10-methylene-5,6,7,8-tetrahydrofolate + NADP(+) = (6R)-5,10-methenyltetrahydrofolate + NADPH. The catalysed reaction is (6R)-5,10-methenyltetrahydrofolate + H2O = (6R)-10-formyltetrahydrofolate + H(+). It functions in the pathway one-carbon metabolism; tetrahydrofolate interconversion. Its function is as follows. Catalyzes the oxidation of 5,10-methylenetetrahydrofolate to 5,10-methenyltetrahydrofolate and then the hydrolysis of 5,10-methenyltetrahydrofolate to 10-formyltetrahydrofolate. This Fervidobacterium nodosum (strain ATCC 35602 / DSM 5306 / Rt17-B1) protein is Bifunctional protein FolD.